The primary structure comprises 461 residues: MSSKNKELLWQSRFSLPFDRDALRFSSSVHVDKALYREDIQGSIAHVTMLAEQQIVSHEEAQAIIAGLQEIELELRDGNIVPHWEDEDIHTVIENRLKEKIGAVAGKLHSGRSRNDQVATDTRLYLRRNIGSLQAALSELLTVLLQKAEHYCDTIIFGYTHLQRAQPISAGHYYMAYFTMFLRDRDRLQDLLKRVNISPLGAAAFAGSTLPLNPARSAELLGFEGIFSNSIDAVSDRDILIEFLSDCAMVMMHLSRFAEDVILWSSYEFGYLEISDAFATGSSLMPQKKNADIAELVRGKAGRVYGNLMAMLTIMKGLPLSYNRDMQEDKQPLFDSTETAINSVTIFSKMLENTRLKEERLAKLTSEDLSLATEIAEYLVQKHIPFRDAHRITGKIVSWSIESGVALPHIPLEQFKSFAAEFDEGIYACLKADASVRAKKTHGSCSFESVKQQINAAKERI.

Belongs to the lyase 1 family. Argininosuccinate lyase subfamily.

It is found in the cytoplasm. The enzyme catalyses 2-(N(omega)-L-arginino)succinate = fumarate + L-arginine. Its pathway is amino-acid biosynthesis; L-arginine biosynthesis; L-arginine from L-ornithine and carbamoyl phosphate: step 3/3. This is Argininosuccinate lyase from Chlorobium chlorochromatii (strain CaD3).